A 510-amino-acid chain; its full sequence is Lysine--tRNA ligase (510 aa).

Positions 420 and 427 each coordinate Mg(2+).

This sequence belongs to the class-II aminoacyl-tRNA synthetase family. In terms of assembly, homodimer. Mg(2+) serves as cofactor.

It is found in the cytoplasm. It catalyses the reaction tRNA(Lys) + L-lysine + ATP = L-lysyl-tRNA(Lys) + AMP + diphosphate. In Psychrobacter sp. (strain PRwf-1), this protein is Lysine--tRNA ligase.